Consider the following 58-residue polypeptide: KKTSRLFTLVLIVLAMNVMMAIISDPVVEAVGCEECPMHCKGKMAKPTCYDGVCNCNV.

The N-terminal stretch at 1–21 (KKTSRLFTLVLIVLAMNVMMA) is a signal peptide. Residues 22 to 30 (IISDPVVEA) constitute a propeptide that is removed on maturation. Cystine bridges form between C33–C49, C36–C54, and C40–C56.

This sequence belongs to the short scorpion toxin superfamily. Potassium channel inhibitor family. Alpha-KTx 09 subfamily. Expressed by the venom gland.

It is found in the secreted. Its function is as follows. Potassium channel inhibitor. This is Potassium channel toxin alpha-KTx 9.9 from Buthus israelis (Israeli scorpion).